Here is a 122-residue protein sequence, read N- to C-terminus: Large ribosomal subunit protein uL14 (122 aa).

It belongs to the universal ribosomal protein uL14 family. As to quaternary structure, part of the 50S ribosomal subunit. Forms a cluster with proteins L3 and L19. In the 70S ribosome, L14 and L19 interact and together make contacts with the 16S rRNA in bridges B5 and B8.

Its function is as follows. Binds to 23S rRNA. Forms part of two intersubunit bridges in the 70S ribosome. This Borrelia turicatae (strain 91E135) protein is Large ribosomal subunit protein uL14.